Here is a 262-residue protein sequence, read N- to C-terminus: Flap endonuclease Xni (262 aa).

D105 is a Mg(2+) binding site. Residues 162-257 (ERSQFLDLMA…FRVIDSPPEK (96 aa)) enclose the 5'-3' exonuclease domain. The K(+) site is built by L172, A173, P181, I183, and I186. Residues 185–190 (GIGPKS) form an interaction with DNA region.

The protein belongs to the Xni family. The cofactor is Mg(2+). K(+) is required as a cofactor.

Functionally, has flap endonuclease activity. During DNA replication, flap endonucleases cleave the 5'-overhanging flap structure that is generated by displacement synthesis when DNA polymerase encounters the 5'-end of a downstream Okazaki fragment. The chain is Flap endonuclease Xni from Shewanella baltica (strain OS155 / ATCC BAA-1091).